A 325-amino-acid polypeptide reads, in one-letter code: Protein UL76 (325 aa).

The segment at 222–286 (ARASAVAGGR…VRGGGAVEPA (65 aa)) is disordered. A compositionally biased stretch (low complexity) spans 247-258 (GPGAQTVSASGA).

The protein belongs to the herpesviridae UL24 family.

The protein resides in the virion. Its subcellular location is the host cytoplasm. It is found in the host nucleus. The protein localises to the host nucleolus. It localises to the host Golgi apparatus. In terms of biological role, may participate in nuclear egress of viral particles. Plays a role in the dispersal of several host nucleolar proteins including NCL/nucleolin and NPM1. Since deletion of host NCL/nucleolin negatively impact on nuclear egress, UL76 supposedly acts on this process through its effect on host nucleoli. Induces cell cycle arrest in host cells at the G2/M phase following by apoptosis. The mechanism involves the inhibition of host mitotic complex cyclinB/CDK1. The protein is Protein UL76 (UL76) of Human cytomegalovirus (strain Merlin) (HHV-5).